A 312-amino-acid chain; its full sequence is Ribonuclease Z (312 aa).

Zn(2+) contacts are provided by His62, His64, Asp66, His67, His144, Asp215, and His273. The active-site Proton acceptor is the Asp66.

The protein belongs to the RNase Z family. In terms of assembly, homodimer. Requires Zn(2+) as cofactor.

The catalysed reaction is Endonucleolytic cleavage of RNA, removing extra 3' nucleotides from tRNA precursor, generating 3' termini of tRNAs. A 3'-hydroxy group is left at the tRNA terminus and a 5'-phosphoryl group is left at the trailer molecule.. In terms of biological role, zinc phosphodiesterase, which displays some tRNA 3'-processing endonuclease activity. Probably involved in tRNA maturation, by removing a 3'-trailer from precursor tRNA. The sequence is that of Ribonuclease Z from Prochlorococcus marinus (strain MIT 9215).